Reading from the N-terminus, the 139-residue chain is Protein FAM216B (139 aa).

This sequence belongs to the FAM216 family.

The protein is Protein FAM216B (FAM216B) of Homo sapiens (Human).